A 209-amino-acid chain; its full sequence is Thymidylate kinase (209 aa).

An ATP-binding site is contributed by glycine 10 to serine 17.

Belongs to the thymidylate kinase family.

The enzyme catalyses dTMP + ATP = dTDP + ADP. Phosphorylation of dTMP to form dTDP in both de novo and salvage pathways of dTTP synthesis. This chain is Thymidylate kinase, found in Francisella tularensis subsp. holarctica (strain OSU18).